The following is a 166-amino-acid chain: Putative protein PTGES3L (166 aa).

The CS domain maps to 46–154 (RQHARTLWYD…RPPPAMDDLD (109 aa)). The tract at residues 142-166 (STKRPPPAMDDLDDDSDSADDATSN) is disordered. Positions 151–166 (DDLDDDSDSADDATSN) are enriched in acidic residues.

This sequence belongs to the p23/wos2 family.

In Homo sapiens (Human), this protein is Putative protein PTGES3L.